The following is a 209-amino-acid chain: Streptogramin A acetyltransferase (209 aa).

His82 is an active-site residue.

It belongs to the transferase hexapeptide repeat family. As to quaternary structure, homohexamer.

Its function is as follows. Inactivates the A compounds of streptogramin antibiotics by acetylation, thus providing resistance to these antibiotics. The polypeptide is Streptogramin A acetyltransferase (vatD) (Enterococcus faecium (Streptococcus faecium)).